We begin with the raw amino-acid sequence, 308 residues long: Cytochrome b (308 aa).

Transmembrane regions (helical) follow at residues 1 to 21, 45 to 66, 81 to 101, and 146 to 166; these read FGSLLGLCLITQIITGLLLAM, WLIRNLHANGASFFFICIYLHI, WNIGVILLLTLMATAFVGYVL, and FFAFHFLLPFVIAGLTLVHLT. Positions 51 and 65 each coordinate heme b. Heme b-binding residues include histidine 150 and histidine 164. A ubiquinone is bound at residue histidine 169. 3 helical membrane-spanning segments follow: residues 194 to 214, 256 to 276, and 288 to 308; these read IKDLLGFALMLIPLITLALFS, LGGVLALAASVLILFLIPLLH, and LSQILFWTLVADLLILTWVGS.

Belongs to the cytochrome b family. As to quaternary structure, the cytochrome bc1 complex contains 11 subunits: 3 respiratory subunits (MT-CYB, CYC1 and UQCRFS1), 2 core proteins (UQCRC1 and UQCRC2) and 6 low-molecular weight proteins (UQCRH/QCR6, UQCRB/QCR7, UQCRQ/QCR8, UQCR10/QCR9, UQCR11/QCR10 and a cleavage product of UQCRFS1). This cytochrome bc1 complex then forms a dimer. Heme b serves as cofactor.

It localises to the mitochondrion inner membrane. Functionally, component of the ubiquinol-cytochrome c reductase complex (complex III or cytochrome b-c1 complex) that is part of the mitochondrial respiratory chain. The b-c1 complex mediates electron transfer from ubiquinol to cytochrome c. Contributes to the generation of a proton gradient across the mitochondrial membrane that is then used for ATP synthesis. In Corvus corax (Common raven), this protein is Cytochrome b (MT-CYB).